Here is a 388-residue protein sequence, read N- to C-terminus: Carbamoyl phosphate synthase small chain (388 aa).

The segment at Met1–Lys198 is CPSase. 3 residues coordinate L-glutamine: Ser53, Gly250, and Gly252. Residues Glu202–Lys388 form the Glutamine amidotransferase type-1 domain. The active-site Nucleophile is the Cys279. 5 residues coordinate L-glutamine: Leu280, Gln283, Asn321, Gly323, and Phe324. Residues His363 and Glu365 contribute to the active site.

It belongs to the CarA family. Composed of two chains; the small (or glutamine) chain promotes the hydrolysis of glutamine to ammonia, which is used by the large (or ammonia) chain to synthesize carbamoyl phosphate. Tetramer of heterodimers (alpha,beta)4.

The enzyme catalyses hydrogencarbonate + L-glutamine + 2 ATP + H2O = carbamoyl phosphate + L-glutamate + 2 ADP + phosphate + 2 H(+). It carries out the reaction L-glutamine + H2O = L-glutamate + NH4(+). It functions in the pathway amino-acid biosynthesis; L-arginine biosynthesis; carbamoyl phosphate from bicarbonate: step 1/1. It participates in pyrimidine metabolism; UMP biosynthesis via de novo pathway; (S)-dihydroorotate from bicarbonate: step 1/3. Functionally, small subunit of the glutamine-dependent carbamoyl phosphate synthetase (CPSase). CPSase catalyzes the formation of carbamoyl phosphate from the ammonia moiety of glutamine, carbonate, and phosphate donated by ATP, constituting the first step of 2 biosynthetic pathways, one leading to arginine and/or urea and the other to pyrimidine nucleotides. The small subunit (glutamine amidotransferase) binds and cleaves glutamine to supply the large subunit with the substrate ammonia. This Caulobacter vibrioides (strain ATCC 19089 / CIP 103742 / CB 15) (Caulobacter crescentus) protein is Carbamoyl phosphate synthase small chain.